The chain runs to 321 residues: MRIGQYQLRNRLIAAPMAGITDRPFRTLCYEMGAGLTVSEMMSSNPQVWESDKSRLRMVHIDEPGIRTVQIAGSAPKEMADAARINVESGAQIIDINMGCPAKKVNRKLAGSALLQYPDVVKSILTEVVNAVDVPVTLKIRTGWAPEHRNCEEIAQLAEDCGIQALTIHGRTRACLFNGEAEYDSIRAVKQKVSIPVIANGDITDPLKARAVLDYTGADALMIGRAAQGRPWIFREIQHYLDTGELLPPLPLAEVKRLLCAHVRELHDFYGPAKGYRIARKHVSWYLQEHAPNDQFRRTFNAIEDASEQLEALEAYFENFA.

FMN contacts are provided by residues 16 to 18 (PMA) and Gln70. The active-site Proton donor is the Cys100. FMN-binding positions include Lys139, 200-202 (NGD), and 224-225 (GR).

Belongs to the Dus family. DusB subfamily. FMN serves as cofactor.

The enzyme catalyses a 5,6-dihydrouridine in tRNA + NAD(+) = a uridine in tRNA + NADH + H(+). The catalysed reaction is a 5,6-dihydrouridine in tRNA + NADP(+) = a uridine in tRNA + NADPH + H(+). Functionally, catalyzes the synthesis of 5,6-dihydrouridine (D), a modified base found in the D-loop of most tRNAs, via the reduction of the C5-C6 double bond in target uridines. The protein is tRNA-dihydrouridine synthase B of Shigella flexneri.